A 634-amino-acid chain; its full sequence is tRNA uridine 5-carboxymethylaminomethyl modification enzyme MnmG (634 aa).

Residue glycine 14–glycine 19 coordinates FAD. An NAD(+)-binding site is contributed by glycine 279–phenylalanine 293.

This sequence belongs to the MnmG family. As to quaternary structure, homodimer. Heterotetramer of two MnmE and two MnmG subunits. Requires FAD as cofactor.

The protein localises to the cytoplasm. Its function is as follows. NAD-binding protein involved in the addition of a carboxymethylaminomethyl (cmnm) group at the wobble position (U34) of certain tRNAs, forming tRNA-cmnm(5)s(2)U34. In Xanthomonas axonopodis pv. citri (strain 306), this protein is tRNA uridine 5-carboxymethylaminomethyl modification enzyme MnmG.